Reading from the N-terminus, the 481-residue chain is Ceramide-binding protein SVF1 (481 aa).

The interval Met1–Pro18 is peripherally associates with membranes. Disordered regions lie at residues Val197 to Ile251 and Asp358 to Tyr389. Composition is skewed to acidic residues over residues Pro203–Thr245 and Gly373–Glu388.

The protein belongs to the SVF1 family. Acetylated at the N-terminus in a NatC complex-dependent manner, which is required for membrane targeting.

It localises to the golgi apparatus. Its subcellular location is the cis-Golgi network membrane. It is found in the endoplasmic reticulum membrane. The protein localises to the cytoplasm. The protein resides in the nucleus. Ceramide-binding protein that may transfer ceramides from the endoplasmic reticulum membrane to the cis-Golgi network membrane, and is thereby required for the biosynthesis of complex sphingolipids. Required for survival in response to oxidative stress. Involved in the diauxic shift. This is Ceramide-binding protein SVF1 (SVF1) from Saccharomyces cerevisiae (strain ATCC 204508 / S288c) (Baker's yeast).